The sequence spans 303 residues: Tyrosine recombinase XerC (303 aa).

A Core-binding (CB) domain is found at 3–89 (IQNDQWVSAF…TLRSFYQFLV (87 aa)). The region spanning 110–297 (KLPSFLYEEE…TKDRLRDVYR (188 aa)) is the Tyr recombinase domain. Active-site residues include Arg-150, Lys-174, His-249, Arg-252, and His-275. The active-site O-(3'-phospho-DNA)-tyrosine intermediate is the Tyr-284.

The protein belongs to the 'phage' integrase family. XerC subfamily. In terms of assembly, forms a cyclic heterotetrameric complex composed of two molecules of XerC and two molecules of XerD.

The protein resides in the cytoplasm. Its function is as follows. Site-specific tyrosine recombinase, which acts by catalyzing the cutting and rejoining of the recombining DNA molecules. The XerC-XerD complex is essential to convert dimers of the bacterial chromosome into monomers to permit their segregation at cell division. It also contributes to the segregational stability of plasmids. In Halalkalibacterium halodurans (strain ATCC BAA-125 / DSM 18197 / FERM 7344 / JCM 9153 / C-125) (Bacillus halodurans), this protein is Tyrosine recombinase XerC.